The sequence spans 257 residues: Imidazole glycerol phosphate synthase subunit HisF (257 aa).

Active-site residues include Asp11 and Asp130.

The protein belongs to the HisA/HisF family. In terms of assembly, heterodimer of HisH and HisF.

It localises to the cytoplasm. It catalyses the reaction 5-[(5-phospho-1-deoxy-D-ribulos-1-ylimino)methylamino]-1-(5-phospho-beta-D-ribosyl)imidazole-4-carboxamide + L-glutamine = D-erythro-1-(imidazol-4-yl)glycerol 3-phosphate + 5-amino-1-(5-phospho-beta-D-ribosyl)imidazole-4-carboxamide + L-glutamate + H(+). It participates in amino-acid biosynthesis; L-histidine biosynthesis; L-histidine from 5-phospho-alpha-D-ribose 1-diphosphate: step 5/9. Functionally, IGPS catalyzes the conversion of PRFAR and glutamine to IGP, AICAR and glutamate. The HisF subunit catalyzes the cyclization activity that produces IGP and AICAR from PRFAR using the ammonia provided by the HisH subunit. The chain is Imidazole glycerol phosphate synthase subunit HisF from Vibrio cholerae serotype O1 (strain ATCC 39541 / Classical Ogawa 395 / O395).